Here is a 319-residue protein sequence, read N- to C-terminus: NADH-ubiquinone oxidoreductase chain 1 (319 aa).

Helical transmembrane passes span threonine 5–methionine 25, leucine 72–proline 92, leucine 102–glycine 122, valine 146–leucine 166, phenylalanine 173–alanine 193, phenylalanine 225–isoleucine 245, glutamate 254–isoleucine 274, and leucine 295–isoleucine 315.

It belongs to the complex I subunit 1 family.

The protein localises to the mitochondrion inner membrane. It carries out the reaction a ubiquinone + NADH + 5 H(+)(in) = a ubiquinol + NAD(+) + 4 H(+)(out). Functionally, core subunit of the mitochondrial membrane respiratory chain NADH dehydrogenase (Complex I) that is believed to belong to the minimal assembly required for catalysis. Complex I functions in the transfer of electrons from NADH to the respiratory chain. The immediate electron acceptor for the enzyme is believed to be ubiquinone. The protein is NADH-ubiquinone oxidoreductase chain 1 (MT-ND1) of Varanus flavescens (Yellow monitor).